The primary structure comprises 693 residues: MDYNKLRNIGISAHIDSGKTTLTERILFYCNKIHAIHEVKGKDGVGATMDSMELERERGITIASAATHVEWKDFPINIIDTPGHVDFTIEVERSLRVLDGAILVLDSVAGVQSQSITVDRQLKRYSVPRLAFVNKCDKTGANPYNVKDQLRSKLDLNSVLMQIPIGLEDKHIGVIDLVLMKAYYFEGKDGTEIIEKEIPSDLLEEAKSKREIMLDTLADFNDELMELHMEGKEVPTEIIYNATRTGTLALKLCPVFMGSAYKNKGVQLLLDAVTRFLPSPHDIKNTALDLNNNEKEIDLKIDNELPTVALAFKLEDGQYGQLTYVRIYQGILKKGQELINSRTSKKFKVGRLIRMHANNTEDIEFGGSGDIVALFGIECASGDTFCDPSINYSMTSMFIPDPVISLSVKPKDKKSADNMAKALGRFTKEDPTFKTYVDIESNETIIQGMGELHLEVYIERMKREFKAEVETGMPQVAYRETITRKAEFNYTHKKQSGGAGQFGRVAGFMEPLDKEGETYEFVNLIKGGVIPTEYIPSCDKGFQKAMERGTLIGFPIVDIKITINDGQYHIVDSSDIAFQLAAIGAFREAYEKAKPTILEPIMKVTLEGPTEFQGNMFGLLNQRRGIITGSLEDGSFSKVEAEVPLSEMFGFSTVLRSSTQGKAEFSMEFLRYGKVPSTIFDELRKKFNDQNKS.

The tr-type G domain maps to 4–281; sequence NKLRNIGISA…AVTRFLPSPH (278 aa). GTP is bound by residues 13 to 20, 80 to 84, and 134 to 137; these read AHIDSGKT, DTPGH, and NKCD.

This sequence belongs to the TRAFAC class translation factor GTPase superfamily. Classic translation factor GTPase family. EF-G/EF-2 subfamily.

It is found in the cytoplasm. Catalyzes the GTP-dependent ribosomal translocation step during translation elongation. During this step, the ribosome changes from the pre-translocational (PRE) to the post-translocational (POST) state as the newly formed A-site-bound peptidyl-tRNA and P-site-bound deacylated tRNA move to the P and E sites, respectively. Catalyzes the coordinated movement of the two tRNA molecules, the mRNA and conformational changes in the ribosome. The sequence is that of Elongation factor G 1 (fusA) from Borreliella burgdorferi (strain ATCC 35210 / DSM 4680 / CIP 102532 / B31) (Borrelia burgdorferi).